Here is a 179-residue protein sequence, read N- to C-terminus: Large ribosomal subunit protein uL5 (179 aa).

This sequence belongs to the universal ribosomal protein uL5 family. Part of the 50S ribosomal subunit; part of the 5S rRNA/L5/L18/L25 subcomplex. Contacts the 5S rRNA and the P site tRNA. Forms a bridge to the 30S subunit in the 70S ribosome.

Functionally, this is one of the proteins that bind and probably mediate the attachment of the 5S RNA into the large ribosomal subunit, where it forms part of the central protuberance. In the 70S ribosome it contacts protein S13 of the 30S subunit (bridge B1b), connecting the 2 subunits; this bridge is implicated in subunit movement. Contacts the P site tRNA; the 5S rRNA and some of its associated proteins might help stabilize positioning of ribosome-bound tRNAs. The sequence is that of Large ribosomal subunit protein uL5 from Alcanivorax borkumensis (strain ATCC 700651 / DSM 11573 / NCIMB 13689 / SK2).